The sequence spans 371 residues: Histidinol-phosphate aminotransferase (371 aa).

Lysine 232 is subject to N6-(pyridoxal phosphate)lysine.

This sequence belongs to the class-II pyridoxal-phosphate-dependent aminotransferase family. Histidinol-phosphate aminotransferase subfamily. In terms of assembly, homodimer. It depends on pyridoxal 5'-phosphate as a cofactor.

It catalyses the reaction L-histidinol phosphate + 2-oxoglutarate = 3-(imidazol-4-yl)-2-oxopropyl phosphate + L-glutamate. The protein operates within amino-acid biosynthesis; L-histidine biosynthesis; L-histidine from 5-phospho-alpha-D-ribose 1-diphosphate: step 7/9. The polypeptide is Histidinol-phosphate aminotransferase (Methylibium petroleiphilum (strain ATCC BAA-1232 / LMG 22953 / PM1)).